The primary structure comprises 239 residues: MLFQKEKVMKGQVLAISGIDTGIGKTVVTGLLARCFAETGWRTITQKIAQTGCEGVSEDIAEHRKLMGIDLQEADLDGTTCPYLFRFPASPHLAATVEGREIDFMTIRRSTFRLQKLYDLVLLEGVGGLLVPLTPELLFADYVRDAGYGLVLVSASRLGSINHTLLSLEACARRGIPVRAIVYNRYFEADERIAANTREVIAAALKRYGFGEAPVIDLNTSGLSAEPGDLQRILNPPGQ.

Position 22–27 (22–27) interacts with ATP; that stretch reads GIGKTV. Thr-26 contributes to the Mg(2+) binding site. Lys-47 is a catalytic residue. A substrate-binding site is contributed by Thr-51. ATP contacts are provided by residues Asp-59, 124–127, and 184–185; these read EGVG and NR. Asp-59 and Glu-124 together coordinate Mg(2+).

Belongs to the dethiobiotin synthetase family. Homodimer. It depends on Mg(2+) as a cofactor.

The protein localises to the cytoplasm. The catalysed reaction is (7R,8S)-7,8-diammoniononanoate + CO2 + ATP = (4R,5S)-dethiobiotin + ADP + phosphate + 3 H(+). It functions in the pathway cofactor biosynthesis; biotin biosynthesis; biotin from 7,8-diaminononanoate: step 1/2. Its function is as follows. Catalyzes a mechanistically unusual reaction, the ATP-dependent insertion of CO2 between the N7 and N8 nitrogen atoms of 7,8-diaminopelargonic acid (DAPA, also called 7,8-diammoniononanoate) to form a ureido ring. The chain is ATP-dependent dethiobiotin synthetase BioD from Chlorobaculum tepidum (strain ATCC 49652 / DSM 12025 / NBRC 103806 / TLS) (Chlorobium tepidum).